The primary structure comprises 890 residues: Translation initiation factor IF-2 (890 aa).

Disordered stretches follow at residues Lys31 to Pro164 and Phe189 to Lys266. Residues Ser42 to Val54 are compositionally biased toward basic and acidic residues. Low complexity predominate over residues Lys55–Ser72. Positions Pro114–Ser128 are enriched in acidic residues. Composition is skewed to basic and acidic residues over residues Pro149 to Glu163 and Pro242 to Lys266. In terms of domain architecture, tr-type G spans Ile395–Lys564. The tract at residues Gly404–Thr411 is G1. A GTP-binding site is contributed by Gly404 to Thr411. A G2 region spans residues Ala429–His433. The tract at residues Asp450–Gly453 is G3. Residues Asp450 to His454 and Asn504 to Asp507 each bind GTP. A G4 region spans residues Asn504 to Asp507. A G5 region spans residues Ser540–Lys542.

It belongs to the TRAFAC class translation factor GTPase superfamily. Classic translation factor GTPase family. IF-2 subfamily.

The protein resides in the cytoplasm. Its function is as follows. One of the essential components for the initiation of protein synthesis. Protects formylmethionyl-tRNA from spontaneous hydrolysis and promotes its binding to the 30S ribosomal subunits. Also involved in the hydrolysis of GTP during the formation of the 70S ribosomal complex. This is Translation initiation factor IF-2 (infB) from Chlamydia pneumoniae (Chlamydophila pneumoniae).